The following is a 228-amino-acid chain: Orotidine 5'-phosphate decarboxylase (228 aa).

Substrate-binding positions include D11, K33, 60 to 69 (DLKLHDIPNT), T117, R178, Q186, G206, and R207. Residue K62 is the Proton donor of the active site.

Belongs to the OMP decarboxylase family. Type 1 subfamily. As to quaternary structure, homodimer.

The enzyme catalyses orotidine 5'-phosphate + H(+) = UMP + CO2. It functions in the pathway pyrimidine metabolism; UMP biosynthesis via de novo pathway; UMP from orotate: step 2/2. Its function is as follows. Catalyzes the decarboxylation of orotidine 5'-monophosphate (OMP) to uridine 5'-monophosphate (UMP). The protein is Orotidine 5'-phosphate decarboxylase of Ehrlichia canis (strain Jake).